An 885-amino-acid chain; its full sequence is Chitobiase (885 aa).

Positions 1–27 (MNAFKLSALARLTATMGFLGGMGSAMA) are cleaved as a signal peptide. Intrachain disulfides connect C56/C66, C400/C408, and C505/C578. Catalysis depends on E540, which acts as the Proton donor. The disordered stretch occupies residues 866–885 (EVQVRSVSPDGKRYSRAEKV). A compositionally biased stretch (basic and acidic residues) spans 875-885 (DGKRYSRAEKV).

This sequence belongs to the glycosyl hydrolase 20 family. In terms of assembly, monomer.

It localises to the periplasm. The enzyme catalyses Hydrolysis of terminal non-reducing N-acetyl-D-hexosamine residues in N-acetyl-beta-D-hexosaminides.. It participates in glycan degradation; chitin degradation. In terms of biological role, digests the beta-1,4-glycosidic bonds in N-acetylglucosamine (GlcNAc) oligomers (mainly dimers). This Serratia marcescens protein is Chitobiase (chb).